We begin with the raw amino-acid sequence, 268 residues long: Calpain small subunit 1 (268 aa).

Position 1 is an N-acetylmethionine (M1). The residue at position 6 (S6) is a Phosphoserine. In terms of domain architecture, EF-hand 1; atypical spans 91 to 125 (EANESEEVRQFRRLFAQLAGDDMEVSATELMNILN). Ca(2+)-binding residues include A109, D112, E114, E119, D137, D152, D154, T156, K158, and E163. EF-hand domains are found at residues 139 to 172 (FGID…NNIK), 169 to 204 (NNIK…AGFH), 205 to 233 (LNEH…ISCL), and 234 to 268 (VRLD…TMYS). N6-acetyllysine is present on K179. The Ca(2+) site is built by D182, D184, S186, T188, E193, and D225.

Homodimer or heterodimer of a large (catalytic) and a small (regulatory) subunit. In presence of calcium, the heterodimer dissociates.

It localises to the cytoplasm. It is found in the cell membrane. Regulatory subunit of the calcium-regulated non-lysosomal thiol-protease which catalyzes limited proteolysis of substrates involved in cytoskeletal remodeling and signal transduction. Essential for embryonic development. The chain is Calpain small subunit 1 (CAPNS1) from Homo sapiens (Human).